The following is a 912-amino-acid chain: MSGKGGWAWWWARLPLCLLLSLYAPWVPSSLGKPKGHPHMNSIRIDGDITLGGLFPVHGRGSEGKACGELKKEKGIHRLEAMLFALDRINNDPDLLPNITLGARILDTCSRDTHALEQSLTFVQALIEKDGTEVRCGSGGPPIITKPERVVGVIGASGSSVSIMVANILRLFKIPQISYASTAPDLSDNSRYDFFSRVVPSDTYQAQAMVDIVRALKWNYVSTLASEGSYGESGVEAFIQKSRENGGVCIAQSVKIPREPKTGEFDKIIKRLLETSNARGIIIFANEDDIRRVLEAARRANQTGHFFWMGSDSWGSKSAPVLRLEEVAEGAVTILPKRMSVRGFDRYFSSRTLDNNRRNIWFAEFWEDNFHCKLSRHALKKGSHIKKCTNRERIGQDSAYEQEGKVQFVIDAVYAMGHALHAMHRDLCPGRVGLCPRMDPVDGTQLLKYIRNVNFSGIAGNPVTFNENGDAPGRYDIYQYQLRNGSAEYKVIGSWTDHLHLRIERMQWPGSGQQLPRSICSLPCQPGERKKTVKGMACCWHCEPCTGYQYQVDRYTCKTCPYDMRPTENRTSCQPIPIVKLEWDSPWAVLPLFLAVVGIAATLFVVVTFVRYNDTPIVKASGRELSYVLLAGIFLCYATTFLMIAEPDLGTCSLRRIFLGLGMSISYAALLTKTNRIYRIFEQGKRSVSAPRFISPASQLAITFILISLQLLGICVWFVVDPSHSVVDFQDQRTLDPRFARGVLKCDISDLSLICLLGYSMLLMVTCTVYAIKTRGVPETFNEAKPIGFTMYTTCIVWLAFIPIFFGTSQSADKLYIQTTTLTVSVSLSASVSLGMLYMPKVYIILFHPEQNVPKRKRSLKAVVTAATMSNKFTQKGNFRPNGEAKSELCENLETPALATKQTYVTYTNHAI.

The N-terminal stretch at 1–32 is a signal peptide; it reads MSGKGGWAWWWARLPLCLLLSLYAPWVPSSLG. The Extracellular segment spans residues 33 to 587; the sequence is KPKGHPHMNS…IVKLEWDSPW (555 aa). A disulfide bond links cysteine 67 and cysteine 109. Asparagine 98 is a glycosylation site (N-linked (GlcNAc...) asparagine). L-glutamate-binding positions include serine 159, 180 to 182, and tyrosine 230; that span reads AST. Intrachain disulfides connect cysteine 249–cysteine 538, cysteine 372–cysteine 388, cysteine 428–cysteine 435, cysteine 520–cysteine 539, cysteine 524–cysteine 542, cysteine 545–cysteine 557, and cysteine 560–cysteine 573. N-linked (GlcNAc...) asparagine glycosylation occurs at asparagine 301. Aspartate 312 contacts L-glutamate. Lysine 405 serves as a coordination point for L-glutamate. Residues asparagine 454 and asparagine 484 are each glycosylated (N-linked (GlcNAc...) asparagine). N-linked (GlcNAc...) asparagine glycosylation occurs at asparagine 569. The helical transmembrane segment at 588-610 threads the bilayer; that stretch reads AVLPLFLAVVGIAATLFVVVTFV. The Cytoplasmic segment spans residues 611–624; sequence RYNDTPIVKASGRE. A helical transmembrane segment spans residues 625 to 645; that stretch reads LSYVLLAGIFLCYATTFLMIA. The Extracellular portion of the chain corresponds to 646–656; it reads EPDLGTCSLRR. A helical membrane pass occupies residues 657 to 675; that stretch reads IFLGLGMSISYAALLTKTN. At 676 to 699 the chain is on the cytoplasmic side; sequence RIYRIFEQGKRSVSAPRFISPASQ. The helical transmembrane segment at 700–720 threads the bilayer; sequence LAITFILISLQLLGICVWFVV. Residues 721-750 lie on the Extracellular side of the membrane; that stretch reads DPSHSVVDFQDQRTLDPRFARGVLKCDISD. Residues 751 to 772 traverse the membrane as a helical segment; that stretch reads LSLICLLGYSMLLMVTCTVYAI. At 773–785 the chain is on the cytoplasmic side; it reads KTRGVPETFNEAK. A helical transmembrane segment spans residues 786–808; the sequence is PIGFTMYTTCIVWLAFIPIFFGT. The Extracellular segment spans residues 809 to 821; it reads SQSADKLYIQTTT. A helical transmembrane segment spans residues 822-847; the sequence is LTVSVSLSASVSLGMLYMPKVYIILF. At 848–912 the chain is on the cytoplasmic side; the sequence is HPEQNVPKRK…TYVTYTNHAI (65 aa).

This sequence belongs to the G-protein coupled receptor 3 family. As to quaternary structure, interacts with PICK1. In terms of tissue distribution, is widely distributed in the CNS. Predominant expression is seen in the granule cells of the cerebellum.

It localises to the cell membrane. Functionally, G-protein coupled receptor for glutamate. Ligand binding causes a conformation change that triggers signaling via guanine nucleotide-binding proteins (G proteins) and modulates the activity of down-stream effectors. Signaling inhibits adenylate cyclase activity. This is Metabotropic glutamate receptor 4 (Grm4) from Rattus norvegicus (Rat).